Consider the following 107-residue polypeptide: Small ribosomal subunit protein uS17 (107 aa).

The protein belongs to the universal ribosomal protein uS17 family. In terms of assembly, part of the 30S ribosomal subunit.

Its function is as follows. One of the primary rRNA binding proteins, it binds specifically to the 5'-end of 16S ribosomal RNA. The protein is Small ribosomal subunit protein uS17 of Nitrosopumilus maritimus (strain SCM1).